We begin with the raw amino-acid sequence, 515 residues long: Dimethylnonatriene synthase (515 aa).

The chain crosses the membrane as a helical span at residues 3–23; the sequence is FLFSTLQLSLFSLALVIFGYI. Position 219 (histidine 219) interacts with substrate. A Glycyl lysine isopeptide (Lys-Gly) (interchain with G-Cter in ubiquitin) cross-link involves residue lysine 252. A heme-binding site is contributed by cysteine 452.

This sequence belongs to the cytochrome P450 family. Heme is required as a cofactor. Expressed in stems, flower peduncles, receptacle of developing and mature flowers and in stigma of mature opening flower buds.

It localises to the membrane. The enzyme catalyses (3S,6E)-nerolidol + reduced [NADPH--hemoprotein reductase] + O2 = (3E)-4,8-dimethylnona-1,3,7-triene + but-3-en-2-one + oxidized [NADPH--hemoprotein reductase] + 2 H2O + H(+). It carries out the reaction (6E,10E)-geranyllinalool + reduced [NADPH--hemoprotein reductase] + O2 = (3E,7E)-4,8,12-trimethyltrideca 1,3,7,11-tetraene + but-3-en-2-one + oxidized [NADPH--hemoprotein reductase] + 2 H2O + H(+). It functions in the pathway secondary metabolite biosynthesis; terpenoid biosynthesis. Involved in the biosynthesis of homoterpenes, attractants of herbivores parasitoids and predators (e.g. predatory mites and parasitoid wasps). Catalyzes the conversion of the C20 (E,E)-geranyllinalool to C16-homoterpene 4,8,12-trimethyltrideca-1,3,7,11-tetraene (TMTT) of the C15 (E)-nerolidol to C11-homoterpene (E)-4,8-dimethyl-1,3,7-nonatriene (DMNT); these volatile compounds are produced upon insect herbivore attack and emitted from flowers and vegetative tissues during herbivore feeding. Required during resistance responses to the fungus Alternaria brassicae. Prevents oviposition of the phloem-feeding insect cabbage whitefly (Aleyrodes proletella). The sequence is that of Dimethylnonatriene synthase from Arabidopsis thaliana (Mouse-ear cress).